We begin with the raw amino-acid sequence, 449 residues long: Phosphoglucosamine mutase (449 aa).

Serine 100 functions as the Phosphoserine intermediate in the catalytic mechanism. Residues serine 100, aspartate 241, aspartate 243, and aspartate 245 each coordinate Mg(2+). Serine 100 carries the post-translational modification Phosphoserine.

Belongs to the phosphohexose mutase family. Mg(2+) is required as a cofactor. In terms of processing, activated by phosphorylation.

It catalyses the reaction alpha-D-glucosamine 1-phosphate = D-glucosamine 6-phosphate. Functionally, catalyzes the conversion of glucosamine-6-phosphate to glucosamine-1-phosphate. This chain is Phosphoglucosamine mutase, found in Clostridium kluyveri (strain NBRC 12016).